A 536-amino-acid chain; its full sequence is Peptide chain release factor 3 (536 aa).

The tr-type G domain occupies 13–281; it reads SHRRTFAIIS…ALIDWAPAPQ (269 aa). GTP-binding positions include 22–29, 90–94, and 144–147; these read SHPDAGKT, DTPGH, and NKCD.

Belongs to the TRAFAC class translation factor GTPase superfamily. Classic translation factor GTPase family. PrfC subfamily.

The protein localises to the cytoplasm. Increases the formation of ribosomal termination complexes and stimulates activities of RF-1 and RF-2. It binds guanine nucleotides and has strong preference for UGA stop codons. It may interact directly with the ribosome. The stimulation of RF-1 and RF-2 is significantly reduced by GTP and GDP, but not by GMP. The sequence is that of Peptide chain release factor 3 from Chromobacterium violaceum (strain ATCC 12472 / DSM 30191 / JCM 1249 / CCUG 213 / NBRC 12614 / NCIMB 9131 / NCTC 9757 / MK).